The primary structure comprises 455 residues: Probable xyloglucan galactosyltransferase GT17 (455 aa).

The Cytoplasmic portion of the chain corresponds to 1–34 (MTFNKRQVKINHWPEKNDKEKQKYSKNRETVKLT). Residues 35 to 55 (LLTLLLLCSICFLFLTLNFPF) form a helical; Signal-anchor for type II membrane protein membrane-spanning segment. The Lumenal portion of the chain corresponds to 56 to 455 (TIEFTASIPR…QARDNVVVSL (400 aa)). N-linked (GlcNAc...) asparagine glycans are attached at residues N70, N169, N230, N390, and N426.

It belongs to the glycosyltransferase 47 family. In terms of tissue distribution, expressed in roots and hypocotyls.

It is found in the golgi apparatus membrane. Functions in xyloglucan synthesis by adding side chains to the xylosylated glucan backbone. Involved in the galactosylation of hemicellulose xyloglucan. The chain is Probable xyloglucan galactosyltransferase GT17 from Arabidopsis thaliana (Mouse-ear cress).